Consider the following 238-residue polypeptide: Uridylate kinase (238 aa).

K12–G15 serves as a coordination point for ATP. A UMP-binding site is contributed by G54. Residues G55 and R59 each contribute to the ATP site. UMP-binding positions include D74 and T135–T142. The ATP site is built by T162, N163, Y168, and D171.

It belongs to the UMP kinase family. Homohexamer.

The protein resides in the cytoplasm. It catalyses the reaction UMP + ATP = UDP + ADP. Its pathway is pyrimidine metabolism; CTP biosynthesis via de novo pathway; UDP from UMP (UMPK route): step 1/1. Its activity is regulated as follows. Inhibited by UTP. Its function is as follows. Catalyzes the reversible phosphorylation of UMP to UDP. In Nitrobacter hamburgensis (strain DSM 10229 / NCIMB 13809 / X14), this protein is Uridylate kinase.